We begin with the raw amino-acid sequence, 144 residues long: Transcription antitermination protein NusB (144 aa).

This sequence belongs to the NusB family.

Functionally, involved in transcription antitermination. Required for transcription of ribosomal RNA (rRNA) genes. Binds specifically to the boxA antiterminator sequence of the ribosomal RNA (rrn) operons. The protein is Transcription antitermination protein NusB of Haemophilus influenzae (strain 86-028NP).